The sequence spans 202 residues: dTTP/UTP pyrophosphatase (202 aa).

The active-site Proton acceptor is Asp76.

Belongs to the Maf family. YhdE subfamily. A divalent metal cation serves as cofactor.

Its subcellular location is the cytoplasm. The catalysed reaction is dTTP + H2O = dTMP + diphosphate + H(+). The enzyme catalyses UTP + H2O = UMP + diphosphate + H(+). Functionally, nucleoside triphosphate pyrophosphatase that hydrolyzes dTTP and UTP. May have a dual role in cell division arrest and in preventing the incorporation of modified nucleotides into cellular nucleic acids. This chain is dTTP/UTP pyrophosphatase, found in Neisseria gonorrhoeae (strain ATCC 700825 / FA 1090).